Consider the following 297-residue polypeptide: N-acetylmuramic acid 6-phosphate etherase (297 aa).

The SIS domain maps to 56–219; the sequence is AIEAFNKGGR…STISMIGIGK (164 aa). The active-site Proton donor is glutamate 84. The active site involves glutamate 115.

This sequence belongs to the GCKR-like family. MurNAc-6-P etherase subfamily. Homodimer.

The enzyme catalyses N-acetyl-D-muramate 6-phosphate + H2O = N-acetyl-D-glucosamine 6-phosphate + (R)-lactate. It functions in the pathway amino-sugar metabolism; N-acetylmuramate degradation. Specifically catalyzes the cleavage of the D-lactyl ether substituent of MurNAc 6-phosphate, producing GlcNAc 6-phosphate and D-lactate. In Lactococcus lactis subsp. cremoris (strain MG1363), this protein is N-acetylmuramic acid 6-phosphate etherase.